The primary structure comprises 118 residues: Hisactophilin-1 (118 aa).

The N-myristoyl glycine moiety is linked to residue Gly-2. Positions Ser-8 to His-109 are contains several HHXH repeats. Repeat copies occupy residues Phe-34–Lys-46 and Phe-74–Lys-86. Residues Phe-34–Lys-86 are 2 X 13 AA approximate repeats.

The protein belongs to the hisactophilin family. As to quaternary structure, homodimer or heterodimer of hatA and hatB, linked by a disulfide bond. Post-translationally, phosphorylated.

The protein resides in the cytoplasm. Its subcellular location is the cell membrane. Its function is as follows. May act as an intracellular pH sensor that links chemotactic signals to responses in the microfilament system of the cells by nucleating actin polymerization or stabilizing the filaments. The sequence is that of Hisactophilin-1 (hatA) from Dictyostelium discoideum (Social amoeba).